Here is an 811-residue protein sequence, read N- to C-terminus: DNA mismatch repair protein MutS (811 aa).

Position 583–590 (583–590 (GPNMAGKS)) interacts with ATP.

Belongs to the DNA mismatch repair MutS family.

Its function is as follows. This protein is involved in the repair of mismatches in DNA. It is possible that it carries out the mismatch recognition step. This protein has a weak ATPase activity. This chain is DNA mismatch repair protein MutS, found in Thermus thermophilus (strain ATCC BAA-163 / DSM 7039 / HB27).